Reading from the N-terminus, the 285-residue chain is Nudix hydrolase 15, mitochondrial (285 aa).

Residues 1 to 23 (MFLLYRRLPSFARTTTTTLLCKS) constitute a mitochondrion transit peptide. The residue at position 24 (Met24) is an N-acetylmethionine. 2 disordered regions span residues 51-72 (RQYK…TDQE) and 129-152 (THSG…GMTA). A Nudix hydrolase domain is found at 99 to 255 (PKRAAVLICL…DKDYMIWGLT (157 aa)). Positions 140-161 (KAEEDDKDDGMTATREAEEEIG) match the Nudix box motif. Positions 155 and 159 each coordinate Mg(2+).

The protein belongs to the Nudix hydrolase family. Mg(2+) is required as a cofactor. It depends on Mn(2+) as a cofactor. As to expression, expressed in roots, leaves, stems and inflorescences.

It localises to the mitochondrion. Functionally, coenzyme A diphosphatase which mediates the cleavage of oxidized CoA. Can use malonyl-CoA, hexanoyl-CoA, lauroyl-CoA, myristoyl-CoA and palmitoyl-CoA as substrates, but not isobutyryl-CoA or propionyl-CoA. The sequence is that of Nudix hydrolase 15, mitochondrial (NUDT15) from Arabidopsis thaliana (Mouse-ear cress).